The primary structure comprises 123 residues: Large ribosomal subunit protein uL14c (123 aa).

The protein belongs to the universal ribosomal protein uL14 family. In terms of assembly, part of the 50S ribosomal subunit. Interacts with IOJAP.

The protein localises to the plastid. The protein resides in the chloroplast. Binds to 23S rRNA. The chain is Large ribosomal subunit protein uL14c from Zea mays (Maize).